A 97-amino-acid polypeptide reads, in one-letter code: Large ribosomal subunit protein eL21 (97 aa).

Residues Met1–Pro26 form a disordered region. The segment covering Ser9–Gln21 has biased composition (basic residues).

It belongs to the eukaryotic ribosomal protein eL21 family.

The protein is Large ribosomal subunit protein eL21 of Methanococcus maripaludis (strain C5 / ATCC BAA-1333).